The following is a 446-amino-acid chain: BAG family molecular chaperone regulator 7 (446 aa).

A disordered region spans residues 230–252; sequence TGGEKKKKHEEKEKKEKIETKSK. Basic and acidic residues predominate over residues 239–250; the sequence is EEKEKKEKIETK. The IQ domain maps to 303 to 332; that stretch reads PEYAAVMIQRAFKAYLIRRSKSLRALRDLA. Residues 330 to 407 enclose the BAG domain; that stretch reads DLAIAKTKLK…AMLDVVDPQP (78 aa). The residue at position 443 (T443) is a Phosphothreonine.

In terms of assembly, binds to the ATPase domain of HSP70/HSC70 chaperones. Interacts with HSP70-11/BIP2.

The protein localises to the endoplasmic reticulum. Functionally, co-chaperone that regulates diverse cellular pathways, such as programmed cell death and stress responses. Necessary for the proper maintenance of the unfolded protein response (UPR) during heat and cold tolerance. This is BAG family molecular chaperone regulator 7 (BAG7) from Arabidopsis thaliana (Mouse-ear cress).